Here is a 436-residue protein sequence, read N- to C-terminus: Adenylosuccinate synthetase (436 aa).

GTP contacts are provided by residues 12–18 and 40–42; these read GDEGKGK and GHT. The active-site Proton acceptor is the Asp-13. Mg(2+)-binding residues include Asp-13 and Gly-40. IMP-binding positions include 13–16, 38–41, Thr-128, Arg-142, Gln-223, Thr-238, and Arg-302; these read DEGK and NAGH. Residue His-41 is the Proton donor of the active site. 298–304 is a binding site for substrate; sequence TTTGRRR. GTP contacts are provided by residues Arg-304, 330–332, and 412–414; these read KLD and SLG.

It belongs to the adenylosuccinate synthetase family. Homodimer. Mg(2+) serves as cofactor.

It localises to the cytoplasm. It catalyses the reaction IMP + L-aspartate + GTP = N(6)-(1,2-dicarboxyethyl)-AMP + GDP + phosphate + 2 H(+). The protein operates within purine metabolism; AMP biosynthesis via de novo pathway; AMP from IMP: step 1/2. Its function is as follows. Plays an important role in the de novo pathway of purine nucleotide biosynthesis. Catalyzes the first committed step in the biosynthesis of AMP from IMP. The sequence is that of Adenylosuccinate synthetase from Prochlorococcus marinus (strain MIT 9215).